The sequence spans 536 residues: Organic anion transporter 3 (536 aa).

Topologically, residues 1 to 11 are cytoplasmic; the sequence is MTFSEILDRVG. Residue Ser-4 is modified to Phosphoserine. The chain crosses the membrane as a helical span at residues 12–32; that stretch reads SMGPFQYLHVTLLALPVLGIA. The Extracellular segment spans residues 33-123; sequence NHNLLQIFTA…LVCSSNKLKE (91 aa). N-linked (GlcNAc...) asparagine glycans are attached at residues Asn-81 and Asn-86. A helical membrane pass occupies residues 124–144; that stretch reads MAQSIFMAGILVGGPVIGELS. At 145 to 158 the chain is on the cytoplasmic side; sequence DRFGRKPILTWSYL. The chain crosses the membrane as a helical span at residues 159–179; it reads MLAASGSGAAFSPSLPVYMIF. Position 180 (Arg-180) is a topological domain, extracellular. Residues 181 to 201 traverse the membrane as a helical segment; sequence FLCGCSISGISLSTVILNVEW. At 202 to 212 the chain is on the cytoplasmic side; that stretch reads VPTSMRAISST. A helical transmembrane segment spans residues 213–233; it reads SIGYCYTIGQFILSGLAYAIP. Residues 234 to 236 are Extracellular-facing; the sequence is QWR. The helical transmembrane segment at 237 to 257 threads the bilayer; the sequence is WLQLTSSAPFFIFSLLSWWVP. At 258–327 the chain is on the cytoplasmic side; the sequence is ESIRWLVLSG…FRVSILRRVT (70 aa). Residues 328–348 form a helical membrane-spanning segment; the sequence is FCLSLAWFSTGFAYYSLAMGV. Residues 349-354 lie on the Extracellular side of the membrane; the sequence is EEFGVN. The helical transmembrane segment at 355-375 threads the bilayer; that stretch reads IYILQIIFGGVDIPAKFITIL. Residues 376–383 are Cytoplasmic-facing; the sequence is SLSYLGRR. Residues 384–404 traverse the membrane as a helical segment; that stretch reads ITQSFLLLLAGGAILALIFVP. The Extracellular segment spans residues 405-411; it reads SEMQLLR. Residues 412-432 traverse the membrane as a helical segment; it reads TALAVFGKGCLSGSFSCLFLY. At 433 to 471 the chain is on the cytoplasmic side; it reads TSELYPTVLRQTGMGISNVWARVGSMIAPLVKITGELQP. The chain crosses the membrane as a helical span at residues 472–492; that stretch reads FIPNVIFGTTALLGGSAAFFL. The Extracellular segment spans residues 493 to 536; that stretch reads LETLNRPLPETIEDIQNWHKQVQKTKQESEAEKASQIIPLKTGG. The segment at 515 to 536 is disordered; the sequence is QKTKQESEAEKASQIIPLKTGG.

The protein belongs to the major facilitator (TC 2.A.1) superfamily. Organic cation transporter (TC 2.A.1.19) family. In terms of tissue distribution, expressed in the liver, brain, kidney, choroid plexus and weakly in the eye. Moderately expressed (at protein level) in the brain capillary endothelial cells (BCEC).

Its subcellular location is the basolateral cell membrane. The catalysed reaction is estrone 3-sulfate(out) + glutarate(in) = estrone 3-sulfate(in) + glutarate(out). It catalyses the reaction estrone 3-sulfate(in) + 2-oxoglutarate(out) = estrone 3-sulfate(out) + 2-oxoglutarate(in). The enzyme catalyses glutarate(in) + 2-oxoglutarate(out) = glutarate(out) + 2-oxoglutarate(in). It carries out the reaction urate(in) + 2-oxoglutarate(out) = urate(out) + 2-oxoglutarate(in). The catalysed reaction is taurocholate(out) + glutarate(in) = taurocholate(in) + glutarate(out). It catalyses the reaction dehydroepiandrosterone 3-sulfate(out) + glutarate(in) = dehydroepiandrosterone 3-sulfate(in) + glutarate(out). The enzyme catalyses prostaglandin F2alpha(out) + glutarate(in) = prostaglandin F2alpha(in) + glutarate(out). It carries out the reaction prostaglandin F2alpha(out) + 2-oxoglutarate(in) = prostaglandin F2alpha(in) + 2-oxoglutarate(out). The catalysed reaction is (R)-carnitine(out) + 2-oxoglutarate(in) = (R)-carnitine(in) + 2-oxoglutarate(out). It catalyses the reaction glutarate(in) + (R)-carnitine(out) = glutarate(out) + (R)-carnitine(in). The enzyme catalyses prostaglandin E2(out) + 2-oxoglutarate(in) = prostaglandin E2(in) + 2-oxoglutarate(out). It carries out the reaction prostaglandin E2(out) + glutarate(in) = prostaglandin E2(in) + glutarate(out). The catalysed reaction is urate(in) + glutarate(out) = urate(out) + glutarate(in). It catalyses the reaction taurocholate(out) + 2-oxoglutarate(in) = taurocholate(in) + 2-oxoglutarate(out). The enzyme catalyses dehydroepiandrosterone 3-sulfate(out) + 2-oxoglutarate(in) = dehydroepiandrosterone 3-sulfate(in) + 2-oxoglutarate(out). It carries out the reaction kynurenate(out) + a dicarboxylate(in) = kynurenate(in) + a dicarboxylate(out). The catalysed reaction is (indol-3-yl)acetate(out) + a dicarboxylate(in) = (indol-3-yl)acetate(in) + a dicarboxylate(out). It catalyses the reaction indoxyl sulfate(out) + a dicarboxylate(in) = indoxyl sulfate(in) + a dicarboxylate(out). The enzyme catalyses N-benzoylglycine(out) + a dicarboxylate(in) = N-benzoylglycine(in) + a dicarboxylate(out). It carries out the reaction 3-carboxy-4-methyl-5-propyl-2-furanpropanoate(out) + a dicarboxylate(in) = 3-carboxy-4-methyl-5-propyl-2-furanpropanoate(in) + a dicarboxylate(out). The catalysed reaction is (6R)-L-erythro-5,6,7,8-tetrahydrobiopterin(out) + a dicarboxylate(in) = (6R)-L-erythro-5,6,7,8-tetrahydrobiopterin(in) + a dicarboxylate(out). It catalyses the reaction L-erythro-7,8-dihydrobiopterin(out) + a dicarboxylate(in) = L-erythro-7,8-dihydrobiopterin(in) + a dicarboxylate(out). The enzyme catalyses L-sepiapterin(out) + a dicarboxylate(in) = L-sepiapterin(in) + a dicarboxylate(out). Functions as an organic anion/dicarboxylate exchanger that couples organic anion uptake indirectly to the sodium gradient. Transports organic anions such as estrone 3-sulfate (E1S) and urate in exchange for dicarboxylates such as glutarate or ketoglutarate (2-oxoglutarate). Plays an important role in the excretion of endogenous and exogenous organic anions, especially from the kidney and the brain. E1S transport is pH- and chloride-dependent and may also involve E1S/cGMP exchange. Responsible for the transport of prostaglandin E2 (PGE2) and prostaglandin F2(alpha) (PGF2(alpha)) in the basolateral side of the renal tubule. Involved in the transport of neuroactive tryptophan metabolites kynurenate and xanthurenate. Functions as a biopterin transporters involved in the uptake and the secretion of coenzymes tetrahydrobiopterin (BH4), dihydrobiopterin (BH2) and sepiapterin to urine, thereby determining baseline levels of blood biopterins. May be involved in the basolateral transport of steviol, a metabolite of the popular sugar substitute stevioside. May participate in the detoxification/ renal excretion of drugs and xenobiotics, such as the histamine H(2)-receptor antagonists fexofenadine and cimetidine, the antibiotic benzylpenicillin (PCG), the anionic herbicide 2,4-dichloro-phenoxyacetate (2,4-D), the diagnostic agent p-aminohippurate (PAH), the antiviral acyclovir (ACV), and the mycotoxin ochratoxin (OTA), by transporting these exogenous organic anions across the cell membrane in exchange for dicarboxylates such as 2-oxoglutarate. Contributes to the renal uptake of potent uremic toxins (indoxyl sulfate (IS), indole acetate (IA), hippurate/N-benzoylglycine (HA) and 3-carboxy-4-methyl-5-propyl-2-furanpropionate (CMPF)), pravastatin, PCG, E1S and dehydroepiandrosterone sulfate (DHEAS), and is partly involved in the renal uptake of temocaprilat (an angiotensin-converting enzyme (ACE) inhibitor). May contribute to the release of cortisol in the adrenals. Involved in one of the detoxification systems on the choroid plexus (CP), removes substrates such as E1S or taurocholate (TC), PCG, 2,4-D and PAH, from the cerebrospinal fluid (CSF) to the blood for eventual excretion in urine and bile. Regulates the CSF concentration of histamine H(2)-receptor antagonists cimetidine and ranitidine at the CP. Also contributes to the uptake of several other organic compounds such as the prostanoids prostaglandin E(2) and prostaglandin F(2-alpha), L-carnitine, and the therapeutic drugs allopurinol, 6-mercaptopurine (6-MP) and 5-fluorouracil (5-FU). Mediates the uptake from brain of organic anions, such as E1S, PAH, and OTA. Mediates the transport of PAH, PCG, and the statins pravastatin and pitavastatin, from the cerebrum into the blood circulation across the blood-brain barrier (BBB). In summary, plays a role in the efflux of drugs and xenobiotics, helping reduce their undesired toxicological effects on the body. The sequence is that of Organic anion transporter 3 (Slc22a8) from Rattus norvegicus (Rat).